The chain runs to 166 residues: Large ribosomal subunit protein uL10 (166 aa).

Belongs to the universal ribosomal protein uL10 family. As to quaternary structure, part of the ribosomal stalk of the 50S ribosomal subunit. The N-terminus interacts with L11 and the large rRNA to form the base of the stalk. The C-terminus forms an elongated spine to which L12 dimers bind in a sequential fashion forming a multimeric L10(L12)X complex.

Forms part of the ribosomal stalk, playing a central role in the interaction of the ribosome with GTP-bound translation factors. The sequence is that of Large ribosomal subunit protein uL10 from Streptococcus uberis (strain ATCC BAA-854 / 0140J).